The primary structure comprises 283 residues: Adenylate dimethylallyltransferase (283 aa).

Belongs to the isopentenyl transferase family.

It carries out the reaction dimethylallyl diphosphate + AMP = N(6)-(dimethylallyl)adenosine 5'-phosphate + diphosphate. In terms of biological role, transfers dimethylallyl groups to AMP as part of the biosynthesis of cytokinin phytohormones like isopentenyl adenine or discadenine which controle spore formation and viability. The chain is Adenylate dimethylallyltransferase (iptA) from Dictyostelium discoideum (Social amoeba).